We begin with the raw amino-acid sequence, 231 residues long: Glycerol-3-phosphate acyltransferase (231 aa).

Transmembrane regions (helical) follow at residues 6–26 (FLFL…LVIG), 55–75 (WGIL…TIFL), 95–115 (LTMK…FSLF), 130–150 (IITS…AIFL), 152–172 (LFGY…IFLW), and 196–216 (LFYF…YSNI).

The protein belongs to the PlsY family. In terms of assembly, probably interacts with PlsX.

Its subcellular location is the cell membrane. It carries out the reaction an acyl phosphate + sn-glycerol 3-phosphate = a 1-acyl-sn-glycero-3-phosphate + phosphate. The protein operates within lipid metabolism; phospholipid metabolism. Catalyzes the transfer of an acyl group from acyl-phosphate (acyl-PO(4)) to glycerol-3-phosphate (G3P) to form lysophosphatidic acid (LPA). This enzyme utilizes acyl-phosphate as fatty acyl donor, but not acyl-CoA or acyl-ACP. This Aster yellows witches'-broom phytoplasma (strain AYWB) protein is Glycerol-3-phosphate acyltransferase.